The following is a 726-amino-acid chain: Probable cadmium-transporting ATPase (726 aa).

The 64-residue stretch at 11 to 74 (DKQVYRVEGF…AGAFENLKVF (64 aa)) folds into the HMA domain. Cd(2+)-binding residues include Cys22 and Cys25. The next 5 helical transmembrane spans lie at 105 to 125 (STLLFATLLIAFGYLSHFVNG), 129 to 149 (LVTSMLFVGSIVIGGYSLFKV), 163 to 179 (TLMTVAVIGAAIIGEWA), 335 to 355 (IIMVIAALVAVVPPLFFGGSW), and 363 to 383 (LAVLVVGCPCALVISTPISIV). The active-site 4-aspartylphosphate intermediate is Asp414. 2 helical membrane-spanning segments follow: residues 671 to 693 (LNIIKANITFAIGIKIIALLLVI) and 698 to 720 (TLWIAILSDMGATILVALNSLRL).

Belongs to the cation transport ATPase (P-type) (TC 3.A.3) family. Type IB subfamily.

It is found in the cell membrane. It carries out the reaction Cd(2+)(in) + ATP + H2O = Cd(2+)(out) + ADP + phosphate + H(+). Its function is as follows. Couples the hydrolysis of ATP with the export of cadmium. This Staphylococcus aureus (strain MRSA252) protein is Probable cadmium-transporting ATPase (cadA).